The primary structure comprises 141 residues: Nucleoside diphosphate kinase (141 aa).

Residues K10, F58, R86, T92, R103, and N113 each coordinate ATP. The Pros-phosphohistidine intermediate role is filled by H116.

The protein belongs to the NDK family. In terms of assembly, homotetramer. Mg(2+) serves as cofactor.

The protein resides in the cytoplasm. It catalyses the reaction a 2'-deoxyribonucleoside 5'-diphosphate + ATP = a 2'-deoxyribonucleoside 5'-triphosphate + ADP. The catalysed reaction is a ribonucleoside 5'-diphosphate + ATP = a ribonucleoside 5'-triphosphate + ADP. In terms of biological role, major role in the synthesis of nucleoside triphosphates other than ATP. The ATP gamma phosphate is transferred to the NDP beta phosphate via a ping-pong mechanism, using a phosphorylated active-site intermediate. This chain is Nucleoside diphosphate kinase, found in Hydrogenovibrio crunogenus (strain DSM 25203 / XCL-2) (Thiomicrospira crunogena).